The following is a 485-amino-acid chain: NADH-quinone oxidoreductase subunit N (485 aa).

The next 14 membrane-spanning stretches (helical) occupy residues 8 to 28 (LIAL…MLSI), 35 to 55 (FLNA…LWFV), 71 to 91 (GFAM…CTFA), 105 to 125 (FYLL…ANHL), 127 to 147 (SLFL…GYAF), 159 to 179 (YTIL…LVYA), 203 to 223 (LLAG…LVPF), 235 to 255 (PAPV…GVVM), 271 to 291 (VVLA…ALSQ), 297 to 317 (LLGY…IALQ), 326 to 346 (VGVY…VVSL), 373 to 393 (AAVM…LGFI), 408 to 430 (WWLV…RVAV), and 455 to 475 (IVVL…QPLI).

The protein belongs to the complex I subunit 2 family. In terms of assembly, NDH-1 is composed of 13 different subunits. Subunits NuoA, H, J, K, L, M, N constitute the membrane sector of the complex.

The protein resides in the cell inner membrane. It catalyses the reaction a quinone + NADH + 5 H(+)(in) = a quinol + NAD(+) + 4 H(+)(out). Functionally, NDH-1 shuttles electrons from NADH, via FMN and iron-sulfur (Fe-S) centers, to quinones in the respiratory chain. The immediate electron acceptor for the enzyme in this species is believed to be ubiquinone. Couples the redox reaction to proton translocation (for every two electrons transferred, four hydrogen ions are translocated across the cytoplasmic membrane), and thus conserves the redox energy in a proton gradient. The polypeptide is NADH-quinone oxidoreductase subunit N (Escherichia coli O1:K1 / APEC).